A 419-amino-acid polypeptide reads, in one-letter code: UDP-N-acetylglucosamine 1-carboxyvinyltransferase (419 aa).

22 to 23 (KN) contributes to the phosphoenolpyruvate binding site. Residue R95 coordinates UDP-N-acetyl-alpha-D-glucosamine. The Proton donor role is filled by C119. 2-(S-cysteinyl)pyruvic acid O-phosphothioketal is present on C119. UDP-N-acetyl-alpha-D-glucosamine-binding positions include 164 to 167 (KVSV), D308, and I330.

This sequence belongs to the EPSP synthase family. MurA subfamily.

Its subcellular location is the cytoplasm. It catalyses the reaction phosphoenolpyruvate + UDP-N-acetyl-alpha-D-glucosamine = UDP-N-acetyl-3-O-(1-carboxyvinyl)-alpha-D-glucosamine + phosphate. The protein operates within cell wall biogenesis; peptidoglycan biosynthesis. Cell wall formation. Adds enolpyruvyl to UDP-N-acetylglucosamine. In Rickettsia prowazekii (strain Madrid E), this protein is UDP-N-acetylglucosamine 1-carboxyvinyltransferase.